A 299-amino-acid polypeptide reads, in one-letter code: Bifunctional protein FolD (299 aa).

NADP(+) contacts are provided by residues 169–171 (GRS), serine 194, and isoleucine 235.

The protein belongs to the tetrahydrofolate dehydrogenase/cyclohydrolase family. In terms of assembly, homodimer.

The enzyme catalyses (6R)-5,10-methylene-5,6,7,8-tetrahydrofolate + NADP(+) = (6R)-5,10-methenyltetrahydrofolate + NADPH. It catalyses the reaction (6R)-5,10-methenyltetrahydrofolate + H2O = (6R)-10-formyltetrahydrofolate + H(+). It participates in one-carbon metabolism; tetrahydrofolate interconversion. Functionally, catalyzes the oxidation of 5,10-methylenetetrahydrofolate to 5,10-methenyltetrahydrofolate and then the hydrolysis of 5,10-methenyltetrahydrofolate to 10-formyltetrahydrofolate. The polypeptide is Bifunctional protein FolD (Trichormus variabilis (strain ATCC 29413 / PCC 7937) (Anabaena variabilis)).